The sequence spans 349 residues: UDP-N-acetylenolpyruvoylglucosamine reductase (349 aa).

Residues 24 to 197 form the FAD-binding PCMH-type domain; that stretch reads FGIAATARFA…VSVTFRLPKQ (174 aa). Arg-173 is an active-site residue. Residue Ser-249 is the Proton donor of the active site. The active site involves Glu-345.

This sequence belongs to the MurB family. Requires FAD as cofactor.

It is found in the cytoplasm. It carries out the reaction UDP-N-acetyl-alpha-D-muramate + NADP(+) = UDP-N-acetyl-3-O-(1-carboxyvinyl)-alpha-D-glucosamine + NADPH + H(+). It functions in the pathway cell wall biogenesis; peptidoglycan biosynthesis. Its function is as follows. Cell wall formation. This chain is UDP-N-acetylenolpyruvoylglucosamine reductase, found in Burkholderia lata (strain ATCC 17760 / DSM 23089 / LMG 22485 / NCIMB 9086 / R18194 / 383).